The sequence spans 488 residues: Transmembrane protein 39A (488 aa).

2 N-linked (GlcNAc...) asparagine glycosylation sites follow: asparagine 31 and asparagine 39. 3 helical membrane passes run 72–92 (GLLFEFLFFIYLLVALFIQYI), 110–130 (TSLNFHLIDYHLAAFITVMLA), and 155–175 (LITARLVLLTLCGWVFCWTLV). Asparagine 180 is a glycosylation site (N-linked (GlcNAc...) asparagine). Helical transmembrane passes span 182-202 (SVLNLLFLGYPFGVYVPLCCF), 287-307 (EVLFNSLFSAYYVAFLPLCFV), 319-339 (CEHLIMVWINAFVMLSTQLLP), 420-440 (LLNLLLIIEGSLVLYQLYSLL), and 446-466 (NHTLSIALILFCNYYVLFKLL).

This sequence belongs to the TMEM39 family.

The protein localises to the endoplasmic reticulum membrane. Functionally, regulates autophagy by controlling the spatial distribution and levels of the intracellular phosphatidylinositol 4-phosphate (PtdIns(4)P) pools. Modulates (PtdIns(4)P) levels by regulating the ER-to-Golgi trafficking of the phosphatidylinositide phosphatase SACM1L. The polypeptide is Transmembrane protein 39A (tmem39a) (Xenopus tropicalis (Western clawed frog)).